The following is a 187-amino-acid chain: Bifunctional protein PyrR (187 aa).

The PRPP-binding motif lies at 109–121; sequence VILVDDVLYSGRS.

It belongs to the purine/pyrimidine phosphoribosyltransferase family. PyrR subfamily.

The enzyme catalyses UMP + diphosphate = 5-phospho-alpha-D-ribose 1-diphosphate + uracil. Its function is as follows. Regulates the transcription of the pyrimidine nucleotide (pyr) operon in response to exogenous pyrimidines. In terms of biological role, also displays a weak uracil phosphoribosyltransferase activity which is not physiologically significant. The protein is Bifunctional protein PyrR of Mycobacterium ulcerans (strain Agy99).